A 430-amino-acid polypeptide reads, in one-letter code: Adenylosuccinate synthetase (430 aa).

GTP-binding positions include 13–19 (GDEGKGK) and 41–43 (GHT). The Proton acceptor role is filled by D14. Mg(2+) is bound by residues D14 and G41. Residues 14 to 17 (DEGK), 39 to 42 (NAGH), T130, R144, Q225, T240, and R304 each bind IMP. H42 (proton donor) is an active-site residue. Position 300 to 306 (300 to 306 (ASTGRPR)) interacts with substrate. GTP-binding positions include R306, 332–334 (KLD), and 414–416 (STG).

It belongs to the adenylosuccinate synthetase family. In terms of assembly, homodimer. Requires Mg(2+) as cofactor.

It is found in the cytoplasm. The catalysed reaction is IMP + L-aspartate + GTP = N(6)-(1,2-dicarboxyethyl)-AMP + GDP + phosphate + 2 H(+). The protein operates within purine metabolism; AMP biosynthesis via de novo pathway; AMP from IMP: step 1/2. Its function is as follows. Plays an important role in the de novo pathway of purine nucleotide biosynthesis. Catalyzes the first committed step in the biosynthesis of AMP from IMP. In Xylella fastidiosa (strain M12), this protein is Adenylosuccinate synthetase.